We begin with the raw amino-acid sequence, 540 residues long: NXPE family member 1 (540 aa).

An N-terminal signal peptide occupies residues 1-22 (MLHKYLKLICLLAAICVLCIIS). 6 N-linked (GlcNAc...) asparagine glycosylation sites follow: Asn24, Asn42, Asn87, Asn155, Asn205, and Asn291.

The protein belongs to the NXPE family. Intestine, and to a lesser extent in kidney.

It is found in the secreted. This Oryctolagus cuniculus (Rabbit) protein is NXPE family member 1 (NXPE1).